The primary structure comprises 84 residues: Putative membrane protein insertion efficiency factor (84 aa).

It belongs to the UPF0161 family.

Its subcellular location is the cell inner membrane. In terms of biological role, could be involved in insertion of integral membrane proteins into the membrane. The chain is Putative membrane protein insertion efficiency factor from Shewanella oneidensis (strain ATCC 700550 / JCM 31522 / CIP 106686 / LMG 19005 / NCIMB 14063 / MR-1).